The sequence spans 401 residues: Argininosuccinate synthase (401 aa).

Residues 7–15 (AYSGGLDTS) and Ala34 contribute to the ATP site. Residues Tyr85 and Ser90 each coordinate L-citrulline. Gly115 serves as a coordination point for ATP. Positions 117, 121, and 122 each coordinate L-aspartate. L-citrulline is bound at residue Asn121. 5 residues coordinate L-citrulline: Arg125, Ser174, Ser183, Glu259, and Tyr271.

It belongs to the argininosuccinate synthase family. Type 1 subfamily. In terms of assembly, homotetramer.

It is found in the cytoplasm. It carries out the reaction L-citrulline + L-aspartate + ATP = 2-(N(omega)-L-arginino)succinate + AMP + diphosphate + H(+). The protein operates within amino-acid biosynthesis; L-arginine biosynthesis; L-arginine from L-ornithine and carbamoyl phosphate: step 2/3. The polypeptide is Argininosuccinate synthase (Pelotomaculum thermopropionicum (strain DSM 13744 / JCM 10971 / SI)).